The chain runs to 136 residues: Regulator of nucleoside diphosphate kinase (136 aa).

Belongs to the Rnk family. As to quaternary structure, interacts with the RNA polymerase.

Its function is as follows. May act as an anti-Gre factor. The chain is Regulator of nucleoside diphosphate kinase from Escherichia coli O6:H1 (strain CFT073 / ATCC 700928 / UPEC).